A 122-amino-acid chain; its full sequence is Prefoldin subunit 1 (122 aa).

This sequence belongs to the prefoldin subunit beta family. Heterohexamer of two PFD-alpha type and four PFD-beta type subunits.

Functionally, binds specifically to cytosolic chaperonin (c-CPN) and transfers target proteins to it. Binds to nascent polypeptide chain and promotes folding in an environment in which there are many competing pathways for nonnative proteins. In Tetraodon nigroviridis (Spotted green pufferfish), this protein is Prefoldin subunit 1 (pfdn1).